A 60-amino-acid chain; its full sequence is Large ribosomal subunit protein bL32 (60 aa).

Belongs to the bacterial ribosomal protein bL32 family.

This chain is Large ribosomal subunit protein bL32, found in Streptococcus pneumoniae serotype 19F (strain G54).